Reading from the N-terminus, the 203-residue chain is Recombination protein RecR (203 aa).

The C4-type zinc-finger motif lies at 57-72 (CARCNTFSETELCVLC). The Toprim domain maps to 80-175 (DVLCVVEMPA…SVSRIARGLP (96 aa)).

This sequence belongs to the RecR family.

In terms of biological role, may play a role in DNA repair. It seems to be involved in an RecBC-independent recombinational process of DNA repair. It may act with RecF and RecO. This Laribacter hongkongensis (strain HLHK9) protein is Recombination protein RecR.